The following is a 67-amino-acid chain: DNA-directed RNA polymerases I, II, and III subunit RPABC5 (67 aa).

Residues Cys-7, Cys-10, Cys-44, and Cys-45 each contribute to the Zn(2+) site.

The protein belongs to the archaeal Rpo10/eukaryotic RPB10 RNA polymerase subunit family. As to quaternary structure, component of the RNA polymerase I (Pol I), RNA polymerase II (Pol II) and RNA polymerase III (Pol III) complexes consisting of at least 13, 12 and 17 subunits, respectively. Pol I complex consists of a ten-subunit catalytic core composed of POLR1A/RPA1, POLR1B/RPA2, POLR1C/RPAC1, POLR1D/RPAC2, POLR1H/RPA12, POLR2E/RPABC1, POLR2F/RPABC2, POLR2H/RPABC3, POLR2K/RPABC4 and POLR2L/RPABC5; a mobile stalk subunit POLR1F/RPA43 protruding from the core and additional subunits homologous to general transcription factors POLR1E/RPA49 and POLR1G/RPA34. Part of Pol I pre-initiation complex (PIC), in which Pol I core assembles with RRN3 and promoter-bound UTBF and SL1/TIF-IB complex. Pol II complex contains a ten-subunit catalytic core composed of POLR2A/RPB1, POLR2B/RPB2, POLR2C/RPB3, POLR2I/RPB9, POLR2J/RPB11, POLR2E/RPABC1, POLR2F/RPABC2, POLR2H/RPABC3, POLR2K/RPABC4 and POLR2L/RPABC5 and a mobile stalk composed of two subunits POLR2D/RPB4 and POLR2G/RPB7. Part of Pol II(G) complex, in which Pol II core associates with an additional subunit POLR2M; unlike conventional Pol II, Pol II(G) functions as a transcriptional repressor. Part of TBP-based Pol II pre-initiation complex (PIC), in which Pol II core assembles with general transcription factors and other specific initiation factors including GTF2E1, GTF2E2, GTF2F1, GTF2F2, TCEA1, ERCC2, ERCC3, GTF2H2, GTF2H3, GTF2H4, GTF2H5, GTF2A1, GTF2A2, GTF2B and TBP; this large multi-subunit PIC complex mediates DNA unwinding and targets Pol II core to the transcription start site where the first phosphodiester bond forms. Pol III complex consists of a ten-subunit catalytic core composed of POLR3A/RPC1, POLR3B/RPC2, POLR1C/RPAC1, POLR1D/RPAC2, POLR3K/RPC10, POLR2E/RPABC1, POLR2F/RPABC2, POLR2H/RPABC3, POLR2K/RPABC4 and POLR2L/RPABC5; a mobile stalk composed of two subunits POLR3H/RPC8 and CRCP/RPC9, protruding from the core and functioning primarily in transcription initiation; and additional subunits homologous to general transcription factors of the RNA polymerase II machinery, POLR3C/RPC3-POLR3F/RPC6-POLR3G/RPC7 heterotrimer required for transcription initiation and POLR3D/RPC4-POLR3E/RPC5 heterodimer involved in both transcription initiation and termination.

The protein localises to the nucleus. It localises to the nucleolus. In terms of biological role, DNA-dependent RNA polymerase catalyzes the transcription of DNA into RNA using the four ribonucleoside triphosphates as substrates. Common component of RNA polymerases I, II and III which synthesize ribosomal RNA precursors, mRNA precursors and many functional non-coding RNAs, and a small RNAs, such as 5S rRNA and tRNAs, respectively. The protein is DNA-directed RNA polymerases I, II, and III subunit RPABC5 (POLR2L) of Bos taurus (Bovine).